A 378-amino-acid polypeptide reads, in one-letter code: Tetraacyldisaccharide 4'-kinase (378 aa).

Ala-63–Thr-70 serves as a coordination point for ATP.

This sequence belongs to the LpxK family.

It carries out the reaction a lipid A disaccharide + ATP = a lipid IVA + ADP + H(+). It functions in the pathway glycolipid biosynthesis; lipid IV(A) biosynthesis; lipid IV(A) from (3R)-3-hydroxytetradecanoyl-[acyl-carrier-protein] and UDP-N-acetyl-alpha-D-glucosamine: step 6/6. Transfers the gamma-phosphate of ATP to the 4'-position of a tetraacyldisaccharide 1-phosphate intermediate (termed DS-1-P) to form tetraacyldisaccharide 1,4'-bis-phosphate (lipid IVA). The sequence is that of Tetraacyldisaccharide 4'-kinase from Anaeromyxobacter dehalogenans (strain 2CP-C).